A 217-amino-acid polypeptide reads, in one-letter code: 3-oxoadipate CoA-transferase subunit B (217 aa).

Glu50 is a catalytic residue.

Belongs to the 3-oxoacid CoA-transferase subunit B family. In terms of assembly, heterodimer.

The enzyme catalyses 3-oxoadipate + succinyl-CoA = 3-oxoadipyl-CoA + succinate. Its pathway is aromatic compound metabolism; beta-ketoadipate pathway; acetyl-CoA and succinyl-CoA from 3-oxoadipate: step 1/2. This chain is 3-oxoadipate CoA-transferase subunit B (pcaJ), found in Acinetobacter baylyi (strain ATCC 33305 / BD413 / ADP1).